The primary structure comprises 357 residues: MADAGKKKLVQQEELRRLMKAKQRRSCSKKRIESPLAKYNSLGHLLCVVCNIQIKSELLWPAHILGKQHKEKVAELKGSKANISSPSNKVQLHHIMKRKGSEPENQESKRIKGTEDQPTALKTKLPEGFFETEETSSAKHAAEKAPSLKLLAGDYEDDDEVEGEEYENVNEASTSLQKPAEIPLPPPTSSADRLPADFFESKMPLVSHSGSVLKADIQEKIVERKDNTAEALPEGFFDDPEADAKVRKVDAPKDQMDKEWEEFQKEIRQVNSVSDAIVAEEDEEGRLDRQIDEIDEQIECYRRVEHLRDLKDTLQDAKMEVLKSKSSKKWQEEIGSDDEETLPSLLYKNWRDKGAFL.

The C2H2-type zinc finger occupies 47–69 (CVVCNIQIKSELLWPAHILGKQH). 3 disordered regions span residues 98–126 (RKGS…TKLP), 157–194 (DDDE…ADRL), and 231–255 (ALPE…PKDQ). Over residues 99–115 (KGSEPENQESKRIKGTE) the composition is skewed to basic and acidic residues. Acidic residues predominate over residues 157 to 168 (DDDEVEGEEYEN). Residues 242–255 (ADAKVRKVDAPKDQ) are compositionally biased toward basic and acidic residues. Residues 279 to 325 (AEEDEEGRLDRQIDEIDEQIECYRRVEHLRDLKDTLQDAKMEVLKSK) adopt a coiled-coil conformation.

It localises to the nucleus. Its subcellular location is the chromosome. The protein localises to the nucleus speckle. Functionally, may act as an important regulator of the cell cycle that participates in the maintenance of genome integrity. The chain is Zinc finger protein 830 from Xenopus tropicalis (Western clawed frog).